The primary structure comprises 219 residues: Resolvase (219 aa).

Residues 15–159 (VARIYLRAST…EDRRERQRQG (145 aa)) form the Resolvase/invertase-type recombinase catalytic domain. Serine 23 (O-(5'-phospho-DNA)-serine intermediate) is an active-site residue.

It belongs to the site-specific recombinase resolvase family.

In terms of biological role, involved in plasmid partition. In Escherichia coli, this protein is Resolvase (parA).